Here is a 361-residue protein sequence, read N- to C-terminus: Phosphoserine aminotransferase (361 aa).

L-glutamate is bound at residue R42. Residues A76 to R77, W102, T153, D173, and Q196 each bind pyridoxal 5'-phosphate. Residue K197 is modified to N6-(pyridoxal phosphate)lysine. N238–T239 is a binding site for pyridoxal 5'-phosphate.

This sequence belongs to the class-V pyridoxal-phosphate-dependent aminotransferase family. SerC subfamily. In terms of assembly, homodimer. Pyridoxal 5'-phosphate serves as cofactor.

Its subcellular location is the cytoplasm. It carries out the reaction O-phospho-L-serine + 2-oxoglutarate = 3-phosphooxypyruvate + L-glutamate. It catalyses the reaction 4-(phosphooxy)-L-threonine + 2-oxoglutarate = (R)-3-hydroxy-2-oxo-4-phosphooxybutanoate + L-glutamate. The protein operates within amino-acid biosynthesis; L-serine biosynthesis; L-serine from 3-phospho-D-glycerate: step 2/3. Its pathway is cofactor biosynthesis; pyridoxine 5'-phosphate biosynthesis; pyridoxine 5'-phosphate from D-erythrose 4-phosphate: step 3/5. Catalyzes the reversible conversion of 3-phosphohydroxypyruvate to phosphoserine and of 3-hydroxy-2-oxo-4-phosphonooxybutanoate to phosphohydroxythreonine. The sequence is that of Phosphoserine aminotransferase from Buchnera aphidicola subsp. Schizaphis graminum (strain Sg).